We begin with the raw amino-acid sequence, 679 residues long: UvrABC system protein B (679 aa).

A Helicase ATP-binding domain is found at 25–412 (QGVNSGEEFQ…EGKFIEQVIR (388 aa)). 38 to 45 (GATGTGKT) is a binding site for ATP. The Beta-hairpin motif lies at 91–114 (YYDYYQPEAYVPVSDTYIAKTASI). The 155-residue stretch at 429–583 (QIDDLLSEIR…KKYNQINGIT (155 aa)) folds into the Helicase C-terminal domain. The UVR domain maps to 639–674 (PSLIDKLENKMKDAAKELNFEEAANLRDRIKKLRQK).

It belongs to the UvrB family. In terms of assembly, forms a heterotetramer with UvrA during the search for lesions. Interacts with UvrC in an incision complex.

Its subcellular location is the cytoplasm. The UvrABC repair system catalyzes the recognition and processing of DNA lesions. A damage recognition complex composed of 2 UvrA and 2 UvrB subunits scans DNA for abnormalities. Upon binding of the UvrA(2)B(2) complex to a putative damaged site, the DNA wraps around one UvrB monomer. DNA wrap is dependent on ATP binding by UvrB and probably causes local melting of the DNA helix, facilitating insertion of UvrB beta-hairpin between the DNA strands. Then UvrB probes one DNA strand for the presence of a lesion. If a lesion is found the UvrA subunits dissociate and the UvrB-DNA preincision complex is formed. This complex is subsequently bound by UvrC and the second UvrB is released. If no lesion is found, the DNA wraps around the other UvrB subunit that will check the other stand for damage. The polypeptide is UvrABC system protein B (Prochlorococcus marinus subsp. pastoris (strain CCMP1986 / NIES-2087 / MED4)).